The chain runs to 425 residues: Serine--tRNA ligase (425 aa).

230-232 (TAE) is an L-serine binding site. 261–263 (RSE) serves as a coordination point for ATP. Glutamate 284 contributes to the L-serine binding site. 348-351 (EISS) contacts ATP. Serine 384 is a binding site for L-serine.

It belongs to the class-II aminoacyl-tRNA synthetase family. Type-1 seryl-tRNA synthetase subfamily. As to quaternary structure, homodimer. The tRNA molecule binds across the dimer.

It is found in the cytoplasm. The enzyme catalyses tRNA(Ser) + L-serine + ATP = L-seryl-tRNA(Ser) + AMP + diphosphate + H(+). It catalyses the reaction tRNA(Sec) + L-serine + ATP = L-seryl-tRNA(Sec) + AMP + diphosphate + H(+). Its pathway is aminoacyl-tRNA biosynthesis; selenocysteinyl-tRNA(Sec) biosynthesis; L-seryl-tRNA(Sec) from L-serine and tRNA(Sec): step 1/1. In terms of biological role, catalyzes the attachment of serine to tRNA(Ser). Is also able to aminoacylate tRNA(Sec) with serine, to form the misacylated tRNA L-seryl-tRNA(Sec), which will be further converted into selenocysteinyl-tRNA(Sec). In Streptococcus pyogenes serotype M3 (strain SSI-1), this protein is Serine--tRNA ligase.